The sequence spans 623 residues: MAPKVTSELLRQLRQAMRNSEYVAEPIQAYIIPSGDAHQSEYIAPCDCRRAFVSGFDGSAGTAIITEEHAAMWTDGRYFLQAAKQMDNNWTLMKMGLKDTPTQEDWLVSVLPEGSRVGVDPLIIPTDYWKKMAKVLRSAGHHLVPVKENLVDKIWTDRPERPCKPLLTLGLDYTGISWKEKVADLRLKMAERSIAWFVVTALDEIAWLFNLRGSDVEHNPVFFSYAIVGLETIMLFIDGDRVDAPGVKQHLLLDLGLEAEYRIQVLPYKSILSELKALCADLSPREKVWVSDKASYAVSEAIPKDHRCCMPYTPICIAKAVKNSAESDGMRRAHIKDAVALCELFNWLEQEVPKGGVTEISAADKAEEFRRQQADFVDLSFPTISSTGPNGAIIHYAPVPETNRTLSLDEVYLIDSGAQYKDGTTDVTRTMHFGTPTAYEKECFTYVLKGHIAVSAAVFPTGTKGHLLDSFARSALWDSGLDYLHGTGHGVGSFLNVHEGPCGISYKTFSDEPLEAGMIVTDEPGYYEDGAFGIRIENVVLVVPAKTKYNFNNRGSLTFEPLTLVPIQTKMIDVNALTDKECDWLNSYHQTCRDVVGKELQSQGRQEALEWLIRETEPVSRQH.

Arg-77 is a binding site for a peptide. The residue at position 304 (Lys-304) is an N6-acetyllysine. Residue His-395 participates in a peptide binding. Positions 415, 426, and 489 each coordinate Mn(2+). 3 residues coordinate a peptide: His-489, His-498, and Glu-523. Mn(2+) contacts are provided by Glu-523 and Glu-537.

It belongs to the peptidase M24B family. As to quaternary structure, homodimer. It depends on Mn(2+) as a cofactor.

It localises to the cytoplasm. The protein localises to the cytosol. The enzyme catalyses Release of any N-terminal amino acid, including proline, that is linked to proline, even from a dipeptide or tripeptide.. Its function is as follows. Metalloaminopeptidase that catalyzes the removal of a penultimate prolyl residue from the N-termini of peptides, such as Arg-Pro-Pro. Contributes to the degradation of bradykinin. In Mus musculus (Mouse), this protein is Xaa-Pro aminopeptidase 1.